The chain runs to 131 residues: Insertion element IS1 protein InsB (131 aa).

Belongs to the transposase 27 family.

In terms of biological role, absolutely required for transposition of IS1. The protein is Insertion element IS1 protein InsB (insB) of Shigella sonnei.